Consider the following 121-residue polypeptide: Large ribosomal subunit protein bL12 (121 aa).

The protein belongs to the bacterial ribosomal protein bL12 family. Homodimer. Part of the ribosomal stalk of the 50S ribosomal subunit. Forms a multimeric L10(L12)X complex, where L10 forms an elongated spine to which 2 to 4 L12 dimers bind in a sequential fashion. Binds GTP-bound translation factors.

Forms part of the ribosomal stalk which helps the ribosome interact with GTP-bound translation factors. Is thus essential for accurate translation. The chain is Large ribosomal subunit protein bL12 from Vibrio cholerae serotype O1 (strain ATCC 39541 / Classical Ogawa 395 / O395).